A 275-amino-acid polypeptide reads, in one-letter code: Large ribosomal subunit protein uL2c (275 aa).

A disordered region spans residues 225-256 (AMNAVDHPHGGGEGRSPIGRSQPSTPWGRPAL).

The protein belongs to the universal ribosomal protein uL2 family. Part of the 50S ribosomal subunit.

Its subcellular location is the plastid. It localises to the chloroplast. The protein is Large ribosomal subunit protein uL2c (rpl2) of Cyanidium caldarium (Red alga).